The following is a 597-amino-acid chain: Aspartate--tRNA(Asp/Asn) ligase (597 aa).

Position 182 (E182) interacts with L-aspartate. Residues 206–209 (QLFK) form an aspartate region. Residue R228 coordinates L-aspartate. ATP is bound by residues 228–230 (RDE) and Q237. H455 contacts L-aspartate. ATP is bound at residue E489. R496 contributes to the L-aspartate binding site. 541–544 (GFDR) provides a ligand contact to ATP.

It belongs to the class-II aminoacyl-tRNA synthetase family. Type 1 subfamily. Homodimer.

The protein resides in the cytoplasm. The enzyme catalyses tRNA(Asx) + L-aspartate + ATP = L-aspartyl-tRNA(Asx) + AMP + diphosphate. In terms of biological role, aspartyl-tRNA synthetase with relaxed tRNA specificity since it is able to aspartylate not only its cognate tRNA(Asp) but also tRNA(Asn). Reaction proceeds in two steps: L-aspartate is first activated by ATP to form Asp-AMP and then transferred to the acceptor end of tRNA(Asp/Asn). This is Aspartate--tRNA(Asp/Asn) ligase from Desulfosudis oleivorans (strain DSM 6200 / JCM 39069 / Hxd3) (Desulfococcus oleovorans).